The primary structure comprises 33 residues: Mu/delta-theraphotoxin-Pm2a (33 aa).

Cystine bridges form between cysteine 2–cysteine 16, cysteine 9–cysteine 21, and cysteine 15–cysteine 27. A Phenylalanine amide modification is found at phenylalanine 33.

In terms of tissue distribution, expressed by the venom gland.

The protein resides in the secreted. In terms of biological role, gating-modifier toxin with very weak activity on Nav1.7/SCN9A and Nav1.8/SCN10A. Shows 22% peak current inhibition (at 10 uM) on Nav1.8/SCN10A sodium channels. Show peak current inhibition and delays fast inactivation on Nav1.7/SCN9A (EC(50)&gt;10 uM). The chain is Mu/delta-theraphotoxin-Pm2a from Poecilotheria metallica (Metallic blue ornamental tree spider).